Consider the following 206-residue polypeptide: Synaptosomal-associated protein 25 (206 aa).

Over residues 1–20 the composition is skewed to basic and acidic residues; the sequence is MAEDADMRNELEEMQRRADQ. The segment at 1–23 is disordered; the sequence is MAEDADMRNELEEMQRRADQLAD. Positions 19–81 constitute a t-SNARE coiled-coil homology 1 domain; that stretch reads DQLADESLES…KEAEKNLTDL (63 aa). 4 S-palmitoyl cysteine lipidation sites follow: C85, C88, C90, and C92. The residue at position 138 (T138) is a Phosphothreonine. Positions 140 to 202 constitute a t-SNARE coiled-coil homology 2 domain; the sequence is DARENEMDEN…DEANQRATKM (63 aa). A Phosphoserine modification is found at S187.

This sequence belongs to the SNAP-25 family. As to quaternary structure, part of the SNARE core complex containing SNAP25, VAMP2 and STX1A. This complex binds CPLX1. Interacts with TRIM9, RIMS1 and SNAPIN. Binds STXBP6. Found in a ternary complex with STX1A and VAMP8. Associates with the BLOC-1 complex. Isoform 1 and isoform 2 interact with BLOC1S6. Interacts with alpha-synuclein/SNCA. Post-translationally, palmitoylated. Cys-85 appears to be the main site, and palmitoylation is required for membrane association.

It localises to the membrane. It is found in the synapse. Its subcellular location is the synaptosome. The protein localises to the cell membrane. Functionally, t-SNARE involved in the molecular regulation of neurotransmitter release. May play an important role in the synaptic function of specific neuronal systems. Associates with proteins involved in vesicle docking and membrane fusion. This is Synaptosomal-associated protein 25 (SNAP25) from Gallus gallus (Chicken).